The primary structure comprises 453 residues: Endoglucanase A (453 aa).

The signal sequence occupies residues 1–26; that stretch reads MNCRKYLLSGLAVFGLAATSAVAALS. Residue Asp82 is the Nucleophile of the active site. The tract at residues 115–126 is linker ('hinge') (Pro-Thr box); the sequence is TTPTTRKPTTTP. His417 is a catalytic residue.

This sequence belongs to the glycosyl hydrolase 9 (cellulase E) family. As to quaternary structure, monomer.

Its subcellular location is the periplasm. The catalysed reaction is Endohydrolysis of (1-&gt;4)-beta-D-glucosidic linkages in cellulose, lichenin and cereal beta-D-glucans.. Its function is as follows. High levels of endoglucanase activity detected on acid-swollen cellulose, ball-milled cellulose, and carboxymethyl cellulose; moderate levels detected on filter paper, phosphoric acid-swollen cellulose, lichenan, and xylan. The sequence is that of Endoglucanase A (endA) from Fibrobacter succinogenes (Bacteroides succinogenes).